Here is a 225-residue protein sequence, read N- to C-terminus: Imidazole glycerol phosphate synthase subunit HisH (225 aa).

The Glutamine amidotransferase type-1 domain occupies 3–225 (TIAIVDYGMG…LYRNFVDWQP (223 aa)). The active-site Nucleophile is the cysteine 82. Catalysis depends on residues histidine 205 and glutamate 207.

Heterodimer of HisH and HisF.

The protein resides in the cytoplasm. The catalysed reaction is 5-[(5-phospho-1-deoxy-D-ribulos-1-ylimino)methylamino]-1-(5-phospho-beta-D-ribosyl)imidazole-4-carboxamide + L-glutamine = D-erythro-1-(imidazol-4-yl)glycerol 3-phosphate + 5-amino-1-(5-phospho-beta-D-ribosyl)imidazole-4-carboxamide + L-glutamate + H(+). The enzyme catalyses L-glutamine + H2O = L-glutamate + NH4(+). It participates in amino-acid biosynthesis; L-histidine biosynthesis; L-histidine from 5-phospho-alpha-D-ribose 1-diphosphate: step 5/9. Its function is as follows. IGPS catalyzes the conversion of PRFAR and glutamine to IGP, AICAR and glutamate. The HisH subunit catalyzes the hydrolysis of glutamine to glutamate and ammonia as part of the synthesis of IGP and AICAR. The resulting ammonia molecule is channeled to the active site of HisF. This chain is Imidazole glycerol phosphate synthase subunit HisH, found in Bordetella pertussis (strain Tohama I / ATCC BAA-589 / NCTC 13251).